Consider the following 239-residue polypeptide: Outer membrane protein PagN (239 aa).

An N-terminal signal peptide occupies residues 1-22; the sequence is MKNFFAVCIIPLVVAWSATASA. The Periplasmic portion of the chain corresponds to 23–26; that stretch reads KEGI. The chain crosses the membrane as a beta stranded span at residues 27–36; the sequence is YITGKAGTSV. The Extracellular portion of the chain corresponds to 37–65; that stretch reads VNVYGINSTFSQDEIVNGHATLPDRTKGV. A beta stranded membrane pass occupies residues 66–76; that stretch reads FGGGVAIGYDF. Topologically, residues 77–81 are periplasmic; it reads YDPFQ. Residues 82-92 traverse the membrane as a beta stranded segment; it reads LPVRLELDTTF. Topologically, residues 93–120 are extracellular; it reads RGETDAKGGQDIIAFGDPVHINVKNQVR. A beta stranded membrane pass occupies residues 121–132; sequence MTTYMVNGYYDF. The Periplasmic portion of the chain corresponds to 133 to 137; it reads HNSTA. The chain crosses the membrane as a beta stranded span at residues 138–148; it reads FTPYISAGVGL. Topologically, residues 149 to 174 are extracellular; the sequence is AHVKLSNNTIPVGFGINETLSASKNN. The chain crosses the membrane as a beta stranded span at residues 175-185; sequence FAWGAGIGAKY. Over 186-190 the chain is Periplasmic; that stretch reads AVTDN. Residues 191–200 traverse the membrane as a beta stranded segment; it reads IMIDASYKYI. Residues 201–230 are Extracellular-facing; the sequence is NAGKVSISKNHYAGDEHTAYDADTKAASND. The beta stranded transmembrane segment at 231-239 threads the bilayer; the sequence is FMLGITYAF.

It localises to the cell outer membrane. In terms of biological role, haemagglutinin that facilitates the adhesion to and invasion of epithelial mammalian cells. Utilizes heparinated proteoglycan as a receptor to successfully invade host cells. The polypeptide is Outer membrane protein PagN (pagN) (Salmonella typhimurium (strain LT2 / SGSC1412 / ATCC 700720)).